A 122-amino-acid chain; its full sequence is Large ribosomal subunit protein uL18 (122 aa).

The protein belongs to the universal ribosomal protein uL18 family. Part of the 50S ribosomal subunit; part of the 5S rRNA/L5/L18/L25 subcomplex. Contacts the 5S and 23S rRNAs.

This is one of the proteins that bind and probably mediate the attachment of the 5S RNA into the large ribosomal subunit, where it forms part of the central protuberance. This chain is Large ribosomal subunit protein uL18, found in Thermosipho melanesiensis (strain DSM 12029 / CIP 104789 / BI429).